A 241-amino-acid chain; its full sequence is Microneme antigen (241 aa).

The N-terminal stretch at 1–34 (MRLPIRFPKYVLYGMASAVWSILFLHILVGDTMS) is a signal peptide. Positions 35-103 (AADALSWSGG…ATGRGPSFVH (69 aa)) are excised as a propeptide. A compositionally biased stretch (basic and acidic residues) spans 61–83 (HEMGKELEQQHGAEEQQMQRDTK). The tract at residues 61–92 (HEMGKELEQQHGAEEQQMQRDTKPAAFSNPPH) is disordered. PAN domains are found at residues 112–181 (CFPH…PRSC) and 185–241 (CTDN…FNKS). 6 disulfides stabilise this stretch: C112/C181, C137/C159, C141/C147, C185/C189, C210/C230, and C214/C220. S121 lines the a carbohydrate pocket. A carbohydrate-binding residues include K162, Y169, and D174.

It belongs to the microneme antigen family. As to quaternary structure, homodimer or heterodimer of major microneme antigen and microneme antigen. In terms of processing, contains six disulfide bonds.

The protein resides in the cytoplasmic vesicle. The protein localises to the secretory vesicle. It is found in the microneme. Functionally, galactose-binding lectin. Plays a role in adhesion to the host cell. Has a potential role in invasion of host cells. The sequence is that of Microneme antigen from Sarcocystis muris.